Here is a 180-residue protein sequence, read N- to C-terminus: UPF0227 protein PC1_2487 (180 aa).

This sequence belongs to the UPF0227 family.

The protein is UPF0227 protein PC1_2487 of Pectobacterium carotovorum subsp. carotovorum (strain PC1).